A 226-amino-acid chain; its full sequence is MTFMIRDVPKDARPRERLLSSGPESLADHELLAILLRTGTKEESVLQLAHRLLKHFEGLRLLKDATIEEITSIKGIGTTKAVQILAAIELGRRISRLSYNGRYVIRSPEDGAKYVMEDMRFLSQEHFVAIYLNTKNQVIHRKTIFIGSLNASIVHPREVFKEAIKRSAASIICVHNHPSGDPTPSREDIDVTKRLAECGRIIGIELLDHLIIGDQKFVSLKEKGYV.

One can recognise an MPN domain in the interval 104–226 (VIRSPEDGAK…FVSLKEKGYV (123 aa)). His175, His177, and Asp188 together coordinate Zn(2+). The JAMM motif motif lies at 175-188 (HNHPSGDPTPSRED).

It belongs to the UPF0758 family.

This chain is UPF0758 protein GWCH70_2550, found in Geobacillus sp. (strain WCH70).